A 319-amino-acid polypeptide reads, in one-letter code: Beta-ketoacyl-[acyl-carrier-protein] synthase III (319 aa).

Residues Cys113 and His246 contribute to the active site. The segment at 247-251 (QANRR) is ACP-binding. Asn276 is a catalytic residue.

This sequence belongs to the thiolase-like superfamily. FabH family. Homodimer.

The protein resides in the cytoplasm. It carries out the reaction malonyl-[ACP] + acetyl-CoA + H(+) = 3-oxobutanoyl-[ACP] + CO2 + CoA. It functions in the pathway lipid metabolism; fatty acid biosynthesis. Its function is as follows. Catalyzes the condensation reaction of fatty acid synthesis by the addition to an acyl acceptor of two carbons from malonyl-ACP. Catalyzes the first condensation reaction which initiates fatty acid synthesis and may therefore play a role in governing the total rate of fatty acid production. Possesses both acetoacetyl-ACP synthase and acetyl transacylase activities. Its substrate specificity determines the biosynthesis of branched-chain and/or straight-chain of fatty acids. The sequence is that of Beta-ketoacyl-[acyl-carrier-protein] synthase III from Rhizorhabdus wittichii (strain DSM 6014 / CCUG 31198 / JCM 15750 / NBRC 105917 / EY 4224 / RW1) (Sphingomonas wittichii).